A 985-amino-acid chain; its full sequence is Phosphoenolpyruvate carboxylase (985 aa).

The segment covering 1 to 17 has biased composition (low complexity); sequence MTQSAARRASSRATPAR. The interval 1-55 is disordered; the sequence is MTQSAARRASSRATPARKTPPAPASQTPAPSPGGTAGTALGPTSRRSSGSAAAKD. Catalysis depends on residues H193 and K634.

The protein belongs to the PEPCase type 1 family. It depends on Mg(2+) as a cofactor.

The catalysed reaction is oxaloacetate + phosphate = phosphoenolpyruvate + hydrogencarbonate. Its function is as follows. Forms oxaloacetate, a four-carbon dicarboxylic acid source for the tricarboxylic acid cycle. The polypeptide is Phosphoenolpyruvate carboxylase (Ralstonia nicotianae (strain ATCC BAA-1114 / GMI1000) (Ralstonia solanacearum)).